Reading from the N-terminus, the 152-residue chain is Large ribosomal subunit protein bL9 (152 aa).

Belongs to the bacterial ribosomal protein bL9 family.

Its function is as follows. Binds to the 23S rRNA. The sequence is that of Large ribosomal subunit protein bL9 from Mycobacterium ulcerans (strain Agy99).